The primary structure comprises 364 residues: Dihydroorotate dehydrogenase (quinone) (364 aa).

FMN contacts are provided by residues 61–65 (AGFDK) and serine 85. Lysine 65 lines the substrate pocket. 110-114 (NRMGF) contacts substrate. Asparagine 139 and asparagine 170 together coordinate FMN. Position 170 (asparagine 170) interacts with substrate. Catalysis depends on serine 173, which acts as the Nucleophile. A substrate-binding site is contributed by asparagine 175. Positions 214 and 242 each coordinate FMN. A substrate-binding site is contributed by 243-244 (NT). Residues glycine 266, glycine 295, and 316 to 317 (YS) each bind FMN.

It belongs to the dihydroorotate dehydrogenase family. Type 2 subfamily. Monomer. Requires FMN as cofactor.

The protein localises to the cell membrane. The enzyme catalyses (S)-dihydroorotate + a quinone = orotate + a quinol. The protein operates within pyrimidine metabolism; UMP biosynthesis via de novo pathway; orotate from (S)-dihydroorotate (quinone route): step 1/1. In terms of biological role, catalyzes the conversion of dihydroorotate to orotate with quinone as electron acceptor. The polypeptide is Dihydroorotate dehydrogenase (quinone) (Bradyrhizobium sp. (strain BTAi1 / ATCC BAA-1182)).